The sequence spans 501 residues: Sensor histidine kinase PdtaS (501 aa).

The tract at residues 4–150 (LGDLLAEHTV…HLETAYRLCA (147 aa)) is GAF. The PAS-like stretch occupies residues 179–291 (DGFIRLDVDG…TEVKRRDRAL (113 aa)). A Histidine kinase domain is found at 300–495 (EIHHRVKNNL…DVVLRVPVGR (196 aa)). Histidine 303 bears the Phosphohistidine; by autocatalysis mark.

In terms of processing, autophosphorylated.

The protein localises to the cytoplasm. It catalyses the reaction ATP + protein L-histidine = ADP + protein N-phospho-L-histidine.. Member of the two-component regulatory system PdtaR/PdtaS. This two-component system plays an essential role in mycobacterial adaptation to poor nutrient conditions. Nutrient deprivation results in increasing intracellular concentrations of cyclic diguanosine monophosphate (c-di-GMP), which binds to the PdtaS sensor and promotes its autophosphorylation, leading to the activation of the signaling cascade. The phosphate group is then transferred to PdtaR. Functionally, in addition, the PdtaR/PdtaS two-component system controls copper and nitric oxide (NO) resistance downstream of the intramembrane protease Rip1. This coupled Rip1/PdtaS/PdtaR circuit controls NO resistance and acute lung infection in mice by relieving PdtaR/PdtaS-mediated repression of isonitrile chalkophore biosynthesis. Two signals are required to fully inactivate the PdtaR/PdtaS system and mediate NO resistance: a cytoplasmic inhibitory signal through the PdtaS kinase mediated by direct sensing of NO and the production of PPE1-5', an NO-induced small RNA, to sequester PdtaR. This Mycobacterium tuberculosis (strain CDC 1551 / Oshkosh) protein is Sensor histidine kinase PdtaS (pdtaS).